Reading from the N-terminus, the 152-residue chain is UPF0266 membrane protein CKO_01158 (152 aa).

Transmembrane regions (helical) follow at residues 6 to 26 (LVLV…QFIM), 45 to 65 (VDSV…VTSH), and 67 to 87 (AQIT…IFWV).

The protein belongs to the UPF0266 family.

It localises to the cell inner membrane. In Citrobacter koseri (strain ATCC BAA-895 / CDC 4225-83 / SGSC4696), this protein is UPF0266 membrane protein CKO_01158.